Reading from the N-terminus, the 557-residue chain is Mercuric reductase (557 aa).

The HMA domain maps to 1–65 (MILLSIEGMT…AIEALGYIAK (65 aa)). The a metal cation site is built by cysteine 11 and cysteine 14. Positions 106 and 126 each coordinate FAD. The cysteines at positions 133 and 138 are disulfide-linked. 4 residues coordinate FAD: lysine 142, alanine 207, aspartate 399, and valine 407. Residues cysteine 554 and cysteine 555 each coordinate Hg(2+).

The protein belongs to the class-I pyridine nucleotide-disulfide oxidoreductase family. Homodimer. FAD is required as a cofactor.

It catalyses the reaction Hg + NADP(+) + H(+) = Hg(2+) + NADPH. In terms of biological role, resistance to Hg(2+) in bacteria appears to be governed by a specialized system which includes mercuric reductase. MerA protein is responsible for volatilizing mercury as Hg(0). The protein is Mercuric reductase (merA) of Shewanella putrefaciens (Pseudomonas putrefaciens).